A 573-amino-acid chain; its full sequence is 3-oxosteroid 1-dehydrogenase (573 aa).

7 to 36 (DLIVVGSGAGACWAPIRAQEQGLKTLVVEK) is an FAD binding site.

This sequence belongs to the FAD-dependent oxidoreductase 2 family. 3-oxosteroid dehydrogenase subfamily. FAD is required as a cofactor.

The protein localises to the cell inner membrane. The enzyme catalyses a 3-oxosteroid + A = a 3-oxo-Delta(1)-steroid + AH2. Its pathway is lipid metabolism; steroid degradation. Dehydrogenates steroids by introducing a double bond in steroid ring A. This is 3-oxosteroid 1-dehydrogenase from Comamonas testosteroni (Pseudomonas testosteroni).